Here is an 85-residue protein sequence, read N- to C-terminus: 4-hydroxyphenylacetate decarboxylase small subunit (85 aa).

Residues H4, C7, C20, C34, C43, C46, C60, and C78 each contribute to the [4Fe-4S] cluster site.

The protein belongs to the HPA decarboxylase small subunit family. In terms of assembly, heterooctamer consisting of 4 large (HpdB) subunits and 4 small (HpdC) subunits, arranged as a tetramer of heterodimers. [4Fe-4S] cluster serves as cofactor.

It catalyses the reaction 4-hydroxyphenylacetate + H(+) = 4-methylphenol + CO2. The enzyme catalyses 3,4-dihydroxyphenylacetate + H(+) = 4-methylcatechol + CO2. Its function is as follows. Component of the HPA decarboxylase that decarboxylates phenylacetates with a hydroxyl group in the p-position. Active toward 4-hydroxyphenylacetate and 3,4-dihydroxyphenylacetate, forming 4-methylphenol and 4-methylcatechol, respectively. Is likely involved in the catabolism of aromatic amino acids such as tyrosine fermentation. 4-methylphenol (p-cresol) formation provides metabolic toxicity, which allows an active suppression of other microbes and may provide growth advantages for the producers in highly competitive environments. The small subunit is essential for enzymatic activity of HPA decarboxylase, and also seems to be involved in the regulation of the enzyme oligomeric state and catalytic activity. The sequence is that of 4-hydroxyphenylacetate decarboxylase small subunit from Clostridioides difficile (strain CD196) (Peptoclostridium difficile).